We begin with the raw amino-acid sequence, 376 residues long: Probable ATP-dependent RNA helicase YfmL (376 aa).

The region spanning 35–205 (AQLIMDGKDV…RELAQEPEVL (171 aa)) is the Helicase ATP-binding domain. 48-55 (SPTGTGKT) is a binding site for ATP. A DEAD box motif is present at residues 153–156 (DETD). Positions 231–374 (KLLQKLSRLE…EAVYAGGKLK (144 aa)) constitute a Helicase C-terminal domain.

This sequence belongs to the DEAD box helicase family.

It carries out the reaction ATP + H2O = ADP + phosphate + H(+). A probable DEAD-box RNA helicase that plays a role in ribosomal 50S subunit assembly. May be a non-specific RNA helicase. This chain is Probable ATP-dependent RNA helicase YfmL (yfmL), found in Bacillus subtilis (strain 168).